Reading from the N-terminus, the 296-residue chain is Light-independent protochlorophyllide reductase iron-sulfur ATP-binding protein (296 aa).

Residues 39–44 (GIGKST) and K68 contribute to the ATP site. Position 43 (S43) interacts with Mg(2+). Positions 124 and 158 each coordinate [4Fe-4S] cluster. Residue 209–210 (NR) coordinates ATP.

Belongs to the NifH/BchL/ChlL family. In terms of assembly, homodimer. Protochlorophyllide reductase is composed of three subunits; ChlL, ChlN and ChlB. The cofactor is [4Fe-4S] cluster.

The catalysed reaction is chlorophyllide a + oxidized 2[4Fe-4S]-[ferredoxin] + 2 ADP + 2 phosphate = protochlorophyllide a + reduced 2[4Fe-4S]-[ferredoxin] + 2 ATP + 2 H2O. Its pathway is porphyrin-containing compound metabolism; chlorophyll biosynthesis (light-independent). Functionally, component of the dark-operative protochlorophyllide reductase (DPOR) that uses Mg-ATP and reduced ferredoxin to reduce ring D of protochlorophyllide (Pchlide) to form chlorophyllide a (Chlide). This reaction is light-independent. The L component serves as a unique electron donor to the NB-component of the complex, and binds Mg-ATP. The sequence is that of Light-independent protochlorophyllide reductase iron-sulfur ATP-binding protein from Prochlorococcus marinus (strain MIT 9303).